The sequence spans 505 residues: Lysine--tRNA ligase (505 aa).

The Mg(2+) site is built by E415 and E422.

This sequence belongs to the class-II aminoacyl-tRNA synthetase family. Homodimer. Mg(2+) serves as cofactor.

The protein resides in the cytoplasm. The catalysed reaction is tRNA(Lys) + L-lysine + ATP = L-lysyl-tRNA(Lys) + AMP + diphosphate. This is Lysine--tRNA ligase from Salmonella arizonae (strain ATCC BAA-731 / CDC346-86 / RSK2980).